The sequence spans 277 residues: Sulfate transport system permease protein CysT (277 aa).

A run of 7 helical transmembrane segments spans residues 17 to 37, 64 to 84, 99 to 119, 136 to 156, 188 to 205, 215 to 235, and 243 to 263; these read LGTS…ALVM, LLAA…MAWI, LMDL…ASLF, VTYT…PFVV, VVLP…ALSF, VIFI…MIFV, and PAAS…LFSI. Residues 60 to 263 enclose the ABC transmembrane type-1 domain; it reads YKVTLLAAFV…AASLLLLFSI (204 aa).

The protein belongs to the binding-protein-dependent transport system permease family. CysTW subfamily. The complex is composed of two ATP-binding proteins (CysA), two transmembrane proteins (CysT and CysW) and a solute-binding protein (CysP).

The protein resides in the cell inner membrane. Functionally, part of the ABC transporter complex CysAWTP (TC 3.A.1.6.1) involved in sulfate/thiosulfate import. Probably responsible for the translocation of the substrate across the membrane. In Salmonella typhimurium (strain LT2 / SGSC1412 / ATCC 700720), this protein is Sulfate transport system permease protein CysT (cysU).